A 284-amino-acid polypeptide reads, in one-letter code: Phosphatidylserine decarboxylase proenzyme (284 aa).

Catalysis depends on charge relay system; for autoendoproteolytic cleavage activity residues Asp-88, His-145, and Ser-248. Ser-248 acts as the Schiff-base intermediate with substrate; via pyruvic acid; for decarboxylase activity in catalysis. Ser-248 bears the Pyruvic acid (Ser); by autocatalysis mark.

This sequence belongs to the phosphatidylserine decarboxylase family. PSD-B subfamily. Prokaryotic type I sub-subfamily. As to quaternary structure, heterodimer of a large membrane-associated beta subunit and a small pyruvoyl-containing alpha subunit. It depends on pyruvate as a cofactor. Is synthesized initially as an inactive proenzyme. Formation of the active enzyme involves a self-maturation process in which the active site pyruvoyl group is generated from an internal serine residue via an autocatalytic post-translational modification. Two non-identical subunits are generated from the proenzyme in this reaction, and the pyruvate is formed at the N-terminus of the alpha chain, which is derived from the carboxyl end of the proenzyme. The autoendoproteolytic cleavage occurs by a canonical serine protease mechanism, in which the side chain hydroxyl group of the serine supplies its oxygen atom to form the C-terminus of the beta chain, while the remainder of the serine residue undergoes an oxidative deamination to produce ammonia and the pyruvoyl prosthetic group on the alpha chain. During this reaction, the Ser that is part of the protease active site of the proenzyme becomes the pyruvoyl prosthetic group, which constitutes an essential element of the active site of the mature decarboxylase.

The protein resides in the cell membrane. The enzyme catalyses a 1,2-diacyl-sn-glycero-3-phospho-L-serine + H(+) = a 1,2-diacyl-sn-glycero-3-phosphoethanolamine + CO2. It participates in phospholipid metabolism; phosphatidylethanolamine biosynthesis; phosphatidylethanolamine from CDP-diacylglycerol: step 2/2. Functionally, catalyzes the formation of phosphatidylethanolamine (PtdEtn) from phosphatidylserine (PtdSer). The polypeptide is Phosphatidylserine decarboxylase proenzyme (Delftia acidovorans (strain DSM 14801 / SPH-1)).